The chain runs to 335 residues: Nucleoid-associated protein YejK (335 aa).

This sequence belongs to the YejK family.

It is found in the cytoplasm. Its subcellular location is the nucleoid. The chain is Nucleoid-associated protein YejK from Escherichia coli (strain K12 / MC4100 / BW2952).